The sequence spans 570 residues: uncharacterized protein (570 aa).

Residues 1–15 (MTESIISSRTASISS) show a composition bias toward low complexity. The tract at residues 1-34 (MTESIISSRTASISSKEGYEIRQGSTDSSSLDLE) is disordered. The residue at position 14 (Ser-14) is a Phosphoserine. 12 consecutive transmembrane segments (helical) span residues 96–116 (WKLY…LFIG), 141–161 (NLNT…HYIM), 163–183 (TFPL…IVFL), 198–218 (FFLG…MGMF), 229–249 (PVFW…AYGL), 261–281 (LFMI…FFYY), 328–348 (PITW…NLAY), 369–389 (VALA…MYLI), 397–417 (AMFW…LPWS), 423–443 (LATM…LGWT), 457–477 (GLMF…LWQS), and 485–505 (PAWI…YLVA).

The protein belongs to the major facilitator superfamily. Allantoate permease family.

Its subcellular location is the endoplasmic reticulum. It is found in the membrane. This is an uncharacterized protein from Schizosaccharomyces pombe (strain 972 / ATCC 24843) (Fission yeast).